Consider the following 240-residue polypeptide: Ribosomal RNA small subunit methyltransferase G (240 aa).

S-adenosyl-L-methionine is bound by residues G79, F84, A130–E131, and R149.

It belongs to the methyltransferase superfamily. RNA methyltransferase RsmG family.

It localises to the cytoplasm. In terms of biological role, specifically methylates the N7 position of a guanine in 16S rRNA. This Lactobacillus acidophilus (strain ATCC 700396 / NCK56 / N2 / NCFM) protein is Ribosomal RNA small subunit methyltransferase G.